The primary structure comprises 231 residues: Protein INCA1 (231 aa).

The segment at 75–99 (SLHPLEGLPPPEKLWRRKRKKLHLE) is interaction with CCNA1 and CCNA1/CDK2 complex; essential for CDK2 inhibitory activity. Positions 90-95 (RRKRKK) match the Nuclear localization signal motif. T180 is modified (phosphothreonine).

Belongs to the INCA family. As to quaternary structure, interacts with CCNA1. Identified in a complex with CCNA1 and CDK2. Interacts with ZNF16; the interaction inhibits INCA1 activity and induces the cell cycle process. Interacts with SPACA9. Interacts with CCNA2, CCNB1 and CCNE1. Interacts with the CCNA1/CDK2 complex. Interacts with ING5, DAZAP2, RNF26, USP15, SPOUT1, DPH7, TRIM26 and RAB5C. Phosphorylated when part of a complex with CCNA1 and CDK2.

The protein resides in the nucleus. It is found in the cytoplasm. Functionally, binds to CDK2-bound cyclins and inhibits the kinase activity of CDK2; binding to cyclins is critical for its function as CDK inhibitor. Inhibits cell growth and proliferation and may play a role in cell cycle control. Required for ING5-mediated regulation of S-phase progression, enhancement of Fas-induced apoptosis and inhibition of cell growth. This chain is Protein INCA1 (Inca1), found in Mus musculus (Mouse).